The chain runs to 872 residues: Paladin (872 aa).

The interval 1 to 37 (MGTTASAAQQVPSTVPSSENVQGNGSGSSNVEDRNSL) is disordered. The N-myristoyl glycine moiety is linked to residue glycine 2. The stretch at 186-210 (RRKENLHENLHDLEKGLRAENLELA) forms a coiled coil.

The protein belongs to the paladin family.

It is found in the cytoplasm. Its subcellular location is the cytosol. This Xenopus tropicalis (Western clawed frog) protein is Paladin (pald1).